The sequence spans 276 residues: Tumor necrosis factor-inducible gene 6 protein (276 aa).

Positions Met1–Gly17 are cleaved as a signal peptide. The 94-residue stretch at Gly36–Asn129 folds into the Link domain. 3 disulfide bridges follow: Cys58-Cys127, Cys82-Cys103, and Cys135-Cys161. Asn118 is a glycosylation site (N-linked (GlcNAc...) asparagine). A CUB domain is found at Cys135 to Val247. Glu183, Asp191, Asp232, Ser234, and Val235 together coordinate Ca(2+). A disulfide bridge connects residues Cys188 and Cys210. The N-linked (GlcNAc...) asparagine glycan is linked to Asn258.

Interacts (via Link domain) with inter-alpha-inhibitor (I-alpha-I) component bikunin. Interacts with ITIH2/HC2; this interaction is required for transesterification of the HC to hyaluronan. Interacts (via Link and CUB domains) with ITIH1. Chondroitin sulfate may be required for the stability of the complex. Interacts (via Link domain) with various C-X-C and C-C chemokines including PF4, CXCL8, CXCL11, CXCL12, CCL2, CCL7, CCL19, CCL21, and CCL27; this interaction interferes with chemokine binding to glycosaminoglycans. Interacts (primarily via Link domain) with BMP2; this interaction is inhibited by hyaluronan. Interacts (via both Link and CUB domains) with TNFSF11. Interacts (via CUB domain) with FN1 (via type III repeats 9-14); this interaction enhances fibronectin fibril assembly. TNFAIP6 may act as a bridging molecule between FN1 and THBS1. In terms of tissue distribution, vascular smooth muscle cells.

It localises to the secreted. In terms of biological role, major regulator of extracellular matrix organization during tissue remodeling. Catalyzes the transfer of a heavy chain (HC) from inter-alpha-inhibitor (I-alpha-I) complex to hyaluronan. Cleaves the ester bond between the C-terminus of the HC and GalNAc residue of the chondroitin sulfate chain in I-alpha-I complex followed by transesterification of the HC to hyaluronan. In the process, potentiates the antiprotease function of I-alpha-I complex through release of free bikunin. Acts as a catalyst in the formation of hyaluronan-HC oligomers and hyaluronan-rich matrix surrounding the cumulus cell-oocyte complex, a necessary step for oocyte fertilization. Assembles hyaluronan in pericellular matrices that serve as platforms for receptor clustering and signaling. Enables binding of hyaluronan deposited on the surface of macrophages to LYVE1 on lymphatic endothelium and facilitates macrophage extravasation. Alters hyaluronan binding to functionally latent CD44 on vascular endothelium, switching CD44 into an active state that supports leukocyte rolling. Modulates the interaction of chemokines with extracellular matrix components and proteoglycans on endothelial cell surface, likely preventing chemokine gradient formation. In a negative feedback mechanism, may limit excessive neutrophil recruitment at inflammatory sites by antagonizing the association of CXCL8 with glycosaminoglycans on vascular endothelium. Has a role in osteogenesis and bone remodeling. Inhibits BMP2-dependent differentiation of mesenchymal stem cell to osteoblasts. Protects against bone erosion during inflammation by inhibiting TNFSF11/RANKL-dependent osteoclast activation. In Oryctolagus cuniculus (Rabbit), this protein is Tumor necrosis factor-inducible gene 6 protein (TNFAIP6).